Reading from the N-terminus, the 517-residue chain is UDP-N-acetylmuramyl-tripeptide synthetase (517 aa).

Position 38 (Ser38) interacts with UDP-N-acetyl-alpha-D-muramoyl-L-alanyl-D-glutamate. Residue 116 to 122 participates in ATP binding; sequence GTKGKTT. Residues Asn160, 162–163, Ser189, and Arg197 each bind UDP-N-acetyl-alpha-D-muramoyl-L-alanyl-D-glutamate; that span reads TT. Lys231 carries the N6-carboxylysine modification.

It belongs to the MurCDEF family. MurE subfamily. In terms of processing, carboxylation is probably crucial for Mg(2+) binding and, consequently, for the gamma-phosphate positioning of ATP.

The protein localises to the cytoplasm. The protein operates within cell wall biogenesis; peptidoglycan biosynthesis. In terms of biological role, catalyzes the addition of an amino acid to the nucleotide precursor UDP-N-acetylmuramoyl-L-alanyl-D-glutamate (UMAG) in the biosynthesis of bacterial cell-wall peptidoglycan. The sequence is that of UDP-N-acetylmuramyl-tripeptide synthetase from Lacticaseibacillus paracasei (strain ATCC 334 / BCRC 17002 / CCUG 31169 / CIP 107868 / KCTC 3260 / NRRL B-441) (Lactobacillus paracasei).